Here is a 273-residue protein sequence, read N- to C-terminus: Protein B4 (273 aa).

Residues 1–24 (MAPKKAVAAPEGGNKENAAVKGSS) form a disordered region. The region spanning 40–118 (SHPPTLSMVV…GATGRFKLAK (79 aa)) is the H15 domain. Positions 120 to 273 (VKTTKAGKEN…AGKKGKKVTN (154 aa)) are disordered. The segment covering 154–256 (AKTEKEPKGE…KDVKAQKDST (103 aa)) has biased composition (basic and acidic residues). Repeat copies occupy residues 189 to 198 (KEAKEVDKAN), 199 to 208 (KEAKEVDKAN), and 209 to 217 (KEAKEVDKA). A 3 X 10 AA tandem repeats region spans residues 189–217 (KEAKEVDKANKEAKEVDKANKEAKEVDKA). A compositionally biased stretch (basic residues) spans 264–273 (AGKKGKKVTN).

It belongs to the histone H1/H5 family. Interacts with nap1l1.

The protein resides in the nucleus. Its subcellular location is the chromosome. The polypeptide is Protein B4 (b4) (Xenopus laevis (African clawed frog)).